Reading from the N-terminus, the 137-residue chain is MRTLWIVAVLLVGVEGSLIQLGEMIFQEMGKGAAKKYGLYGCNCGMGRRGRPQDATDRCCSVHKCCYKKLTDCDPKTDRYSYSWENGDIVCGGDDPCTKEVCECDKAATICFRDNLDTYDKKYKIFPKFLCKKPEPC.

The signal sequence occupies residues 1–16 (MRTLWIVAVLLVGVEG). Cystine bridges form between Cys-42–Cys-131, Cys-44–Cys-60, Cys-59–Cys-111, Cys-65–Cys-137, Cys-66–Cys-104, Cys-73–Cys-97, and Cys-91–Cys-102. Residues 121 to 133 (KKYKIFPKFLCKK) form an important for membrane-damaging activities in eukaryotes and bacteria; heparin-binding region.

Belongs to the phospholipase A2 family. Group II subfamily. K49 sub-subfamily. In terms of tissue distribution, expressed by the venom gland.

Its subcellular location is the secreted. Its function is as follows. Snake venom phospholipase A2 homolog that lacks enzymatic activity. Is myotoxic and displays edema-inducing activities in mouse paw. A model of myotoxic mechanism has been proposed: an apo Lys49-PLA2 is activated by the entrance of a hydrophobic molecule (e.g. fatty acid) at the hydrophobic channel of the protein leading to a reorientation of a monomer. This reorientation causes a transition between 'inactive' to 'active' states, causing alignment of C-terminal and membrane-docking sites (MDoS) side-by-side and putting the membrane-disruption sites (MDiS) in the same plane, exposed to solvent and in a symmetric position for both monomers. The MDoS region stabilizes the toxin on membrane by the interaction of charged residues with phospholipid head groups. Subsequently, the MDiS region destabilizes the membrane with penetration of hydrophobic residues. This insertion causes a disorganization of the membrane, allowing an uncontrolled influx of ions (i.e. calcium and sodium), and eventually triggering irreversible intracellular alterations and cell death. The sequence is that of Phospholipase A2 homolog PLA2-03 from Ovophis okinavensis (Ryukyu Island pit viper).